A 396-amino-acid polypeptide reads, in one-letter code: Tryptophan synthase beta chain (396 aa).

An N6-(pyridoxal phosphate)lysine modification is found at lysine 86.

The protein belongs to the TrpB family. As to quaternary structure, tetramer of two alpha and two beta chains. Pyridoxal 5'-phosphate serves as cofactor.

The enzyme catalyses (1S,2R)-1-C-(indol-3-yl)glycerol 3-phosphate + L-serine = D-glyceraldehyde 3-phosphate + L-tryptophan + H2O. It functions in the pathway amino-acid biosynthesis; L-tryptophan biosynthesis; L-tryptophan from chorismate: step 5/5. Functionally, the beta subunit is responsible for the synthesis of L-tryptophan from indole and L-serine. The sequence is that of Tryptophan synthase beta chain from Aliivibrio fischeri (strain MJ11) (Vibrio fischeri).